Here is a 224-residue protein sequence, read N- to C-terminus: ATP-dependent dethiobiotin synthetase BioD (224 aa).

ATP is bound at residue 12–17 (EVGKTV). Thr-16 serves as a coordination point for Mg(2+). Residue Lys-34 is part of the active site. Thr-38 serves as a coordination point for substrate. Residues Asp-47, 106 to 109 (EGAG), 166 to 167 (GS), and 196 to 198 (PEG) contribute to the ATP site. Mg(2+) contacts are provided by Asp-47 and Glu-106.

The protein belongs to the dethiobiotin synthetase family. In terms of assembly, homodimer. Requires Mg(2+) as cofactor.

It localises to the cytoplasm. The catalysed reaction is (7R,8S)-7,8-diammoniononanoate + CO2 + ATP = (4R,5S)-dethiobiotin + ADP + phosphate + 3 H(+). It participates in cofactor biosynthesis; biotin biosynthesis; biotin from 7,8-diaminononanoate: step 1/2. Functionally, catalyzes a mechanistically unusual reaction, the ATP-dependent insertion of CO2 between the N7 and N8 nitrogen atoms of 7,8-diaminopelargonic acid (DAPA, also called 7,8-diammoniononanoate) to form a ureido ring. This is ATP-dependent dethiobiotin synthetase BioD from Saccharopolyspora erythraea (strain ATCC 11635 / DSM 40517 / JCM 4748 / NBRC 13426 / NCIMB 8594 / NRRL 2338).